Here is a 1493-residue protein sequence, read N- to C-terminus: Mitogen-activated protein kinase kinase kinase 1 (1493 aa).

Low complexity-rich tracts occupy residues 1–23 (MAAA…ASPE) and 33–42 (GSGAPAAGAG). 2 disordered regions span residues 1–171 (MAAA…DRPE) and 222–295 (LQGE…EETS). A2 is modified (N-acetylalanine). Phosphoserine is present on S21. Pro residues predominate over residues 84 to 94 (PPCPSTSPSPE). Low complexity-rich tracts occupy residues 95–108 (PADA…FQPA) and 135–151 (ARSP…APSG). Residue S137 is modified to Phosphoserine. A compositionally biased stretch (basic and acidic residues) spans 152–171 (REMENKETLKGLHKMDDRPE). Residues 230-257 (SAAPAPKGRRSPSPGSSPSGRSGKPESP) show a composition bias toward low complexity. The residue at position 265 (S265) is a Phosphoserine. Phosphothreonine is present on T275. 3 positions are modified to phosphoserine: S282, S287, and S290. The segment at 328–356 (YRVFIGPQNCSCGRGTFCIHLLFVMLRVF) adopts an SWIM-type zinc-finger fold. Residues 433–482 (CPICLLGMLDEESLTVCEDGCRNKLHHHCMSIWAEECRRNREPLICPLCR) form an RING-type zinc finger. The span at 496-506 (SSPVDSPTSLR) shows a compositional bias: polar residues. 4 disordered regions span residues 496 to 524 (SSPV…SQRR), 866 to 910 (DTLD…LSAS), 923 to 955 (VGLP…SPLS), and 992 to 1060 (PCKI…ASKN). A phosphoserine mark is found at S497, S521, and S910. Low complexity predominate over residues 507–522 (GVQQPSSPQQPVAGSQ). 2 stretches are compositionally biased toward polar residues: residues 925–940 (LPSS…TVQT) and 998–1014 (ASPQ…QRTC). Phosphoserine occurs at positions 999 and 1024. Polar residues predominate over residues 1049–1060 (GSTSKLGDASKN). The 266-residue stretch at 1224–1489 (WLKGQQIGLG…SRELLKHPVF (266 aa)) folds into the Protein kinase domain. Residues 1230 to 1238 (IGLGAFSSC) and K1253 each bind ATP. The Proton acceptor role is filled by D1350. A phosphothreonine; by autocatalysis mark is found at T1381 and T1393.

This sequence belongs to the protein kinase superfamily. STE Ser/Thr protein kinase family. MAP kinase kinase kinase subfamily. Binds both upstream activators and downstream substrates in multimolecular complexes through its N-terminus. Oligomerizes after binding MAP4K2 or TRAF2. Interacts (via the kinase catalytic domain) with STK38. Interacts with GRIPAP1. The cofactor is Mg(2+). Autophosphorylated. In terms of tissue distribution, most highly expressed in spleen, kidney and lung.

The protein resides in the membrane. The enzyme catalyses L-seryl-[protein] + ATP = O-phospho-L-seryl-[protein] + ADP + H(+). The catalysed reaction is L-threonyl-[protein] + ATP = O-phospho-L-threonyl-[protein] + ADP + H(+). Activated by autophosphorylation on Thr-1381 and Thr-1393 following oligomerization. In terms of biological role, component of a protein kinase signal transduction cascade. Activates the ERK and JNK kinase pathways by phosphorylation of MAP2K1 and MAP2K4. May phosphorylate the MAPK8/JNK1 kinase. Activates CHUK and IKBKB, the central protein kinases of the NF-kappa-B pathway. The chain is Mitogen-activated protein kinase kinase kinase 1 (Map3k1) from Rattus norvegicus (Rat).